Here is a 64-residue protein sequence, read N- to C-terminus: Putative antitoxin VapB1 (64 aa).

Functionally, possibly the antitoxin component of a type II toxin-antitoxin (TA) system. Its cognate toxin is VapC1 (Potential). The sequence is that of Putative antitoxin VapB1 (vapB1) from Methanocaldococcus jannaschii (strain ATCC 43067 / DSM 2661 / JAL-1 / JCM 10045 / NBRC 100440) (Methanococcus jannaschii).